We begin with the raw amino-acid sequence, 500 residues long: NADH-quinone oxidoreductase subunit N (500 aa).

Transmembrane regions (helical) follow at residues 13–33 (VMMP…IDLF), 42–62 (LLGL…LSLW), 79–99 (FAKS…LLSI), 111–131 (GEFY…ASSG), 133–153 (LITL…LVAI), 168–188 (VITG…IFGF), 211–231 (YVLS…LASA), 245–265 (TTPV…VIVL), 281–301 (ASML…TMII), 321–341 (VAHA…MFEA), 342–362 (IWFY…ILQV), 386–406 (AIAM…AGFI), 424–444 (VLAS…FGIF), and 461–481 (PPGV…LGVF).

Belongs to the complex I subunit 2 family. As to quaternary structure, NDH-1 is composed of 14 different subunits. Subunits NuoA, H, J, K, L, M, N constitute the membrane sector of the complex.

The protein resides in the cell membrane. It carries out the reaction a quinone + NADH + 5 H(+)(in) = a quinol + NAD(+) + 4 H(+)(out). In terms of biological role, NDH-1 shuttles electrons from NADH, via FMN and iron-sulfur (Fe-S) centers, to quinones in the respiratory chain. The immediate electron acceptor for the enzyme in this species is believed to be a menaquinone. Couples the redox reaction to proton translocation (for every two electrons transferred, four hydrogen ions are translocated across the cytoplasmic membrane), and thus conserves the redox energy in a proton gradient. The polypeptide is NADH-quinone oxidoreductase subunit N (Anoxybacillus flavithermus (strain DSM 21510 / WK1)).